The following is a 130-amino-acid chain: Small ribosomal subunit protein uS11 (130 aa).

It belongs to the universal ribosomal protein uS11 family. Part of the 30S ribosomal subunit. Interacts with proteins S7 and S18. Binds to IF-3.

Functionally, located on the platform of the 30S subunit, it bridges several disparate RNA helices of the 16S rRNA. Forms part of the Shine-Dalgarno cleft in the 70S ribosome. This is Small ribosomal subunit protein uS11 from Syntrophus aciditrophicus (strain SB).